The sequence spans 356 residues: Glutamine synthetase cytosolic isozyme 1-4 (356 aa).

Serine 2 bears the N-acetylserine mark. A phosphoserine mark is found at serine 2 and serine 48. The 81-residue stretch at isoleucine 19–glycine 99 folds into the GS beta-grasp domain. A disordered region spans residues alanine 37–aspartate 66. The region spanning lysine 106–proline 356 is the GS catalytic domain.

This sequence belongs to the glutamine synthetase family. In terms of assembly, homooctamer. Interacts with GRF3. As to expression, expressed in the pericycle in the region of lateral root emergence.

The protein resides in the cytoplasm. The enzyme catalyses L-glutamate + NH4(+) + ATP = L-glutamine + ADP + phosphate + H(+). High-affinity glutamine synthetase. May contribute to the homeostatic control of glutamine synthesis in roots. The sequence is that of Glutamine synthetase cytosolic isozyme 1-4 from Arabidopsis thaliana (Mouse-ear cress).